We begin with the raw amino-acid sequence, 645 residues long: Rab11 family-interacting protein 1 (645 aa).

Residues 1-128 enclose the C2 domain; the sequence is MSLAASAGRG…DQGRRKKQWY (128 aa). Basic and acidic residues predominate over residues 171–187; sequence PFGKLKDKIKGKNKDSA. The disordered stretch occupies residues 171-215; that stretch reads PFGKLKDKIKGKNKDSASDTASAIVPSVTPSVDSDDESFSKDKKK. Phosphoserine occurs at positions 186, 204, 208, and 236. Residues 259 to 296 are disordered; the sequence is WDDDAHEDESSSASDVMSHKRTSSTDQQPNQSNFSLPK. Residues 282–293 show a composition bias toward polar residues; it reads STDQQPNQSNFS. Phosphoserine occurs at positions 301, 316, 340, 342, 344, 346, 357, 358, and 383. The interval 330-545 is disordered; that stretch reads PEARSEIRES…PRPHPVKPMN (216 aa). Composition is skewed to basic and acidic residues over residues 378–391 and 418–432; these read SDRR…KDSM and AARE…ESKK. Ser434 bears the Phosphoserine mark. The segment covering 459–487 has biased composition (basic and acidic residues); the sequence is SEKEKERKGALVEAQLREEDLMRRPEKDA. The 63-residue stretch at 573–635 folds into the FIP-RBD domain; that stretch reads KKYQPSDPAF…EETPNILRVP (63 aa). The segment at 581–645 is necessary for interaction with RAB4A and RAB11A, subcellular location and endosomal recycling; it reads AFAYAQLTHD…AQMGKKAGKM (65 aa).

In terms of assembly, homooligomer. Interacts with RAB11A, RAB11B, RAB25, RAB4A and RAB14.

The protein resides in the recycling endosome. Its subcellular location is the cytoplasmic vesicle. Functionally, a Rab11 effector protein involved in the endosomal recycling process. Also involved in controlling membrane trafficking along the phagocytic pathway and in phagocytosis. Interaction with RAB14 may function in the process of neurite formation. This Mus musculus (Mouse) protein is Rab11 family-interacting protein 1 (Rab11fip1).